We begin with the raw amino-acid sequence, 439 residues long: High-energy light unresponsive protein 1 (439 aa).

Topologically, residues 1 to 67 are cytoplasmic; that stretch reads MPPPSSHSNI…LGLNQSIRPN (67 aa). Residues 68-88 form a helical membrane-spanning segment; that stretch reads NSLLFRIYSWLVFCLLLFTTL. The Extracellular segment spans residues 89–114; it reads RKFNQVGVRPNGTRENLQEFFANPRS. Residues 115 to 135 form a helical membrane-spanning segment; sequence MITLCNALIMLSGLLASLQLY. Topologically, residues 136–164 are cytoplasmic; it reads TLGAKRLKPLKILCQFSLNVRTKQAERRQ. A helical transmembrane segment spans residues 165–185; the sequence is FMINTFLAVFSGLLALTMAAT. Over 186–211 the chain is Extracellular; sequence YAMSKWGYILYIVGTPNLDTETIFCV. Residues 212-232 form a helical membrane-spanning segment; that stretch reads LLDSYALFVSRAAISALAILF. Residues 233–290 are Cytoplasmic-facing; sequence YQHCSVIRRSIKHLINEMVPAEQDECPLPESSLQKIHDCQISYQRIFNGKAVIEEYYS. Residues 291–311 form a helical membrane-spanning segment; it reads FVLFYSYGVCIPIFCFLMFVG. At 312 to 324 the chain is on the extracellular side; the sequence is MSAQSICWSEVVS. A helical transmembrane segment spans residues 325-345; it reads IVIWIVNAILVLLLFSLPAFM. The Cytoplasmic segment spans residues 346–402; the sequence is INEDGDRLVASSFRMYHETFHEERDLTVLSQMTFFTFQIHSTKLTLSACNYFYMDRS. A helical membrane pass occupies residues 403-423; the sequence is ILLSLFSAILTYFLILWEFDI. The Extracellular segment spans residues 424-439; the sequence is KNNQSLQNIANHTIHT.

The protein belongs to the insect chemoreceptor superfamily. Gustatory receptor (GR) family. In terms of tissue distribution, expressed in the AVG and PVT neurons of the tail.

The protein localises to the cell membrane. Functionally, photoreceptor for short wavelength (UV) light that mediates UV-light-induced avoidance behavior. Directly senses and absorbs both UV-A and UV-B light with very high efficiency. Absorption of UV-B but not UV-A light shows resistance to photobleaching. In contrast to other photoreceptors, does not use a prosthetic chromophore to capture photons and only depends on its protein conformation. Might have a role in response to white light exposure. In Caenorhabditis elegans, this protein is High-energy light unresponsive protein 1.